The following is a 426-amino-acid chain: MKLKSRFTSIIGVITLFFSQTVTAESDVVISVDEGVSMAQPIAVVPFKANGGVPADVGQIIADDLRNSGKFTPVERSKLPAQPGSAAEVNSQQWTDIGVDSVVVGQVTPTGGGYNVAYQLVDTLSNPATVLAQGAFNVPAAQIRQGAHTVSDQVFEKITQIRGAFRTKIAYVVQRGVSSYELRVSDYDGYNAFTVVKSKEPLMSPEWSPDGSRLAYVTFENKKAQVVVHDLRSGSRRVVAALRGHNGAPAFSPDGSRIAFASNQDGELDIYVVGANGGKPSKLTANAGNNTEPSWSPDGSTIYFTSDRAGSPQVYRMGLSGGGASPMGGSGSYNAKVSSDGKNLIMIAGDKVVKRDLASGGTEVLSSTFLDESPSISPNGIMVIYSSTKGTSKVLQLVSADGRFKANLPGAGGQFKFPAWSPYLTK.

Positions 1–24 are cleaved as a signal peptide; the sequence is MKLKSRFTSIIGVITLFFSQTVTA.

This sequence belongs to the TolB family. In terms of assembly, the Tol-Pal system is composed of five core proteins: the inner membrane proteins TolA, TolQ and TolR, the periplasmic protein TolB and the outer membrane protein Pal. They form a network linking the inner and outer membranes and the peptidoglycan layer.

Its subcellular location is the periplasm. Part of the Tol-Pal system, which plays a role in outer membrane invagination during cell division and is important for maintaining outer membrane integrity. This is Tol-Pal system protein TolB from Actinobacillus pleuropneumoniae serotype 3 (strain JL03).